A 486-amino-acid chain; its full sequence is N-succinylglutamate 5-semialdehyde dehydrogenase (486 aa).

220 to 225 (GSSRTG) contributes to the NAD(+) binding site. Active-site residues include Glu243 and Cys277.

This sequence belongs to the aldehyde dehydrogenase family. AstD subfamily.

The catalysed reaction is N-succinyl-L-glutamate 5-semialdehyde + NAD(+) + H2O = N-succinyl-L-glutamate + NADH + 2 H(+). It participates in amino-acid degradation; L-arginine degradation via AST pathway; L-glutamate and succinate from L-arginine: step 4/5. In terms of biological role, catalyzes the NAD-dependent reduction of succinylglutamate semialdehyde into succinylglutamate. The sequence is that of N-succinylglutamate 5-semialdehyde dehydrogenase from Shewanella woodyi (strain ATCC 51908 / MS32).